A 207-amino-acid polypeptide reads, in one-letter code: Guanylate kinase (207 aa).

The Guanylate kinase-like domain maps to 6-185 (GLLIVLSGPS…AKNRIQCIVE (180 aa)). ATP is bound at residue 13–20 (GPSGVGKG).

Belongs to the guanylate kinase family.

Its subcellular location is the cytoplasm. It carries out the reaction GMP + ATP = GDP + ADP. In terms of biological role, essential for recycling GMP and indirectly, cGMP. The polypeptide is Guanylate kinase (Staphylococcus aureus (strain USA300)).